The chain runs to 243 residues: Pyridoxine 5'-phosphate synthase (243 aa).

Asn-9 is a binding site for 3-amino-2-oxopropyl phosphate. 1-deoxy-D-xylulose 5-phosphate is bound at residue 11–12 (DH). A 3-amino-2-oxopropyl phosphate-binding site is contributed by Arg-20. Residue His-45 is the Proton acceptor of the active site. Arg-47 and His-52 together coordinate 1-deoxy-D-xylulose 5-phosphate. Glu-72 (proton acceptor) is an active-site residue. Thr-102 contacts 1-deoxy-D-xylulose 5-phosphate. The active-site Proton donor is His-193. Residues Gly-194 and 215 to 216 (GH) each bind 3-amino-2-oxopropyl phosphate.

This sequence belongs to the PNP synthase family. Homooctamer; tetramer of dimers.

The protein resides in the cytoplasm. The enzyme catalyses 3-amino-2-oxopropyl phosphate + 1-deoxy-D-xylulose 5-phosphate = pyridoxine 5'-phosphate + phosphate + 2 H2O + H(+). The protein operates within cofactor biosynthesis; pyridoxine 5'-phosphate biosynthesis; pyridoxine 5'-phosphate from D-erythrose 4-phosphate: step 5/5. Catalyzes the complicated ring closure reaction between the two acyclic compounds 1-deoxy-D-xylulose-5-phosphate (DXP) and 3-amino-2-oxopropyl phosphate (1-amino-acetone-3-phosphate or AAP) to form pyridoxine 5'-phosphate (PNP) and inorganic phosphate. The sequence is that of Pyridoxine 5'-phosphate synthase from Pectobacterium atrosepticum (strain SCRI 1043 / ATCC BAA-672) (Erwinia carotovora subsp. atroseptica).